The primary structure comprises 156 residues: Small ribosomal subunit protein uS10m (156 aa).

The protein belongs to the universal ribosomal protein uS10 family.

It is found in the mitochondrion. Functionally, ribosomal protein required for normal mitochondrial function and normal larval development. Thought to have a role in insulin/IGF signaling. The protein is Small ribosomal subunit protein uS10m (mrps-10) of Caenorhabditis elegans.